Consider the following 110-residue polypeptide: DNA-directed RNA polymerase subunit omega (110 aa).

The protein belongs to the RNA polymerase subunit omega family. In terms of assembly, the RNAP catalytic core consists of 2 alpha, 1 beta, 1 beta' and 1 omega subunit. When a sigma factor is associated with the core the holoenzyme is formed, which can initiate transcription.

The catalysed reaction is RNA(n) + a ribonucleoside 5'-triphosphate = RNA(n+1) + diphosphate. Promotes RNA polymerase assembly. Latches the N- and C-terminal regions of the beta' subunit thereby facilitating its interaction with the beta and alpha subunits. The chain is DNA-directed RNA polymerase subunit omega from Nocardioides sp. (strain ATCC BAA-499 / JS614).